A 356-amino-acid chain; its full sequence is Histidinol-phosphate aminotransferase (356 aa).

An N6-(pyridoxal phosphate)lysine modification is found at lysine 208.

Belongs to the class-II pyridoxal-phosphate-dependent aminotransferase family. Histidinol-phosphate aminotransferase subfamily. As to quaternary structure, homodimer. Requires pyridoxal 5'-phosphate as cofactor.

It carries out the reaction L-histidinol phosphate + 2-oxoglutarate = 3-(imidazol-4-yl)-2-oxopropyl phosphate + L-glutamate. Its pathway is amino-acid biosynthesis; L-histidine biosynthesis; L-histidine from 5-phospho-alpha-D-ribose 1-diphosphate: step 7/9. The polypeptide is Histidinol-phosphate aminotransferase (Lactococcus lactis subsp. cremoris (strain SK11)).